The primary structure comprises 135 residues: Ribonuclease P protein component (135 aa).

This sequence belongs to the RnpA family. As to quaternary structure, consists of a catalytic RNA component (M1 or rnpB) and a protein subunit.

The catalysed reaction is Endonucleolytic cleavage of RNA, removing 5'-extranucleotides from tRNA precursor.. Its function is as follows. RNaseP catalyzes the removal of the 5'-leader sequence from pre-tRNA to produce the mature 5'-terminus. It can also cleave other RNA substrates such as 4.5S RNA. The protein component plays an auxiliary but essential role in vivo by binding to the 5'-leader sequence and broadening the substrate specificity of the ribozyme. The polypeptide is Ribonuclease P protein component (Xylella fastidiosa (strain Temecula1 / ATCC 700964)).